A 400-amino-acid chain; its full sequence is MNFLLCIFKGVYVIKLIQRFFKLESAGGILLLFSAVVAMLLANSPLSNQYNDFLNLPVSLQIGSFSINKTLIHWINDGFMAVFFVLVGMEVKKELFEGALSTYQQAIFPAIAAIGGMVIPAVVYWFIAKQDPSLANGWAIPMATDIAFALGIMALLSKQVPLPLKIFLLALAIIDDLGAIVVIALFFSHGLSVQALIFSAVAIIVLILLNRFKVSALCAYMVVGAILWASVLKSGVHATLAGVIIGFSIPLKGKKGERPLDDFEHILSSWSSFVILPLFAFANAGVSFAGIDVNMISSPLLLAIASGLIIGKPVGIFGFSYLSVKLGLAKLPDGINFKQIFAVAVLCGIGFTMSMFLASLAFDANAGESVNTLSRLGILLGSTVSAILGYLFLKQTTKLS.

Transmembrane regions (helical) follow at residues 26–46 (AGGI…NSPL), 71–91 (LIHW…GMEV), 107–127 (IFPA…YWFI), 137–157 (GWAI…ALLS), 166–186 (IFLL…IALF), 189–209 (HGLS…LILL), 212–232 (FKVS…ASVL), 233–253 (KSGV…PLKG), 273–293 (FVIL…GIDV), 299–319 (PLLL…IFGF), 340–360 (IFAV…LASL), and 373–393 (LSRL…YLFL).

It belongs to the NhaA Na(+)/H(+) (TC 2.A.33) antiporter family.

Its subcellular location is the cell inner membrane. It carries out the reaction Na(+)(in) + 2 H(+)(out) = Na(+)(out) + 2 H(+)(in). Functionally, na(+)/H(+) antiporter that extrudes sodium in exchange for external protons. The chain is Na(+)/H(+) antiporter NhaA from Haemophilus influenzae (strain 86-028NP).